We begin with the raw amino-acid sequence, 712 residues long: Patatin-like phospholipase domain-containing protein NFIA_019760 (712 aa).

The span at 1 to 13 shows a compositional bias: basic and acidic residues; sequence MTSDEKSATRDIY. The disordered stretch occupies residues 1–21; the sequence is MTSDEKSATRDIYDPNTLPDY. A helical transmembrane segment spans residues 85 to 105; sequence WPFLFTVFAWITVLGFAYTLT. One can recognise a PNPLA domain in the interval 275–466; that stretch reads LCLSGGATFA…RTDIPIKALN (192 aa). Residues 306–310 carry the GXSXG motif; sequence GTSGG. The Nucleophile role is filled by Ser308. The active-site Proton acceptor is the Asp453. The disordered stretch occupies residues 628-687; it reads RRRQDRAEEHADRMVERLDQSFPERQSDYKDESHYTEVSDSLSATSSRPHTPDARRSSMF. Basic and acidic residues-rich tracts occupy residues 632 to 646 and 652 to 664; these read DRAE…ERLD and RQSD…HYTE. Positions 665–676 are enriched in polar residues; sequence VSDSLSATSSRP. Residues 677–687 are compositionally biased toward basic and acidic residues; the sequence is HTPDARRSSMF.

This sequence belongs to the PLPL family.

It is found in the membrane. Functionally, probable lipid hydrolase. The sequence is that of Patatin-like phospholipase domain-containing protein NFIA_019760 from Neosartorya fischeri (strain ATCC 1020 / DSM 3700 / CBS 544.65 / FGSC A1164 / JCM 1740 / NRRL 181 / WB 181) (Aspergillus fischerianus).